Reading from the N-terminus, the 874-residue chain is Alanine--tRNA ligase (874 aa).

Positions 562, 566, 664, and 668 each coordinate Zn(2+).

This sequence belongs to the class-II aminoacyl-tRNA synthetase family. Requires Zn(2+) as cofactor.

The protein localises to the cytoplasm. The catalysed reaction is tRNA(Ala) + L-alanine + ATP = L-alanyl-tRNA(Ala) + AMP + diphosphate. In terms of biological role, catalyzes the attachment of alanine to tRNA(Ala) in a two-step reaction: alanine is first activated by ATP to form Ala-AMP and then transferred to the acceptor end of tRNA(Ala). Also edits incorrectly charged Ser-tRNA(Ala) and Gly-tRNA(Ala) via its editing domain. This is Alanine--tRNA ligase from Shewanella sediminis (strain HAW-EB3).